The sequence spans 142 residues: Mediator of RNA polymerase II transcription subunit 21 (142 aa).

The stretch at 87–131 forms a coiled coil; the sequence is AEEQLSRIDSLQKKLIQVEGEKIEAIKRKESLTKDIEELINEFTE.

This sequence belongs to the Mediator complex subunit 21 family. In terms of assembly, component of the Mediator complex.

It is found in the nucleus. Functionally, component of the Mediator complex, a coactivator involved in the regulated transcription of nearly all RNA polymerase II-dependent genes. Mediator functions as a bridge to convey information from gene-specific regulatory proteins to the basal RNA polymerase II transcription machinery. Mediator is recruited to promoters by direct interactions with regulatory proteins and serves as a scaffold for the assembly of a functional preinitiation complex with RNA polymerase II and the general transcription factors. This Eremothecium gossypii (strain ATCC 10895 / CBS 109.51 / FGSC 9923 / NRRL Y-1056) (Yeast) protein is Mediator of RNA polymerase II transcription subunit 21 (SRB7).